Consider the following 255-residue polypeptide: Triosephosphate isomerase (255 aa).

Asn9 to Lys11 serves as a coordination point for substrate. His95 acts as the Electrophile in catalysis. Catalysis depends on Glu167, which acts as the Proton acceptor. Substrate is bound by residues Gly173, Ser212, and Gly233–Gly234.

Belongs to the triosephosphate isomerase family. As to quaternary structure, homodimer.

The protein resides in the cytoplasm. The enzyme catalyses D-glyceraldehyde 3-phosphate = dihydroxyacetone phosphate. The protein operates within carbohydrate biosynthesis; gluconeogenesis. Its pathway is carbohydrate degradation; glycolysis; D-glyceraldehyde 3-phosphate from glycerone phosphate: step 1/1. Its function is as follows. Involved in the gluconeogenesis. Catalyzes stereospecifically the conversion of dihydroxyacetone phosphate (DHAP) to D-glyceraldehyde-3-phosphate (G3P). This is Triosephosphate isomerase from Escherichia fergusonii (strain ATCC 35469 / DSM 13698 / CCUG 18766 / IAM 14443 / JCM 21226 / LMG 7866 / NBRC 102419 / NCTC 12128 / CDC 0568-73).